The primary structure comprises 51 residues: UPF0391 membrane protein Mbur_2216 (51 aa).

2 helical membrane-spanning segments follow: residues 1–21 (MADL…AYVL) and 31–51 (MTIA…TILL).

Belongs to the UPF0391 family.

It localises to the cell membrane. In Methanococcoides burtonii (strain DSM 6242 / NBRC 107633 / OCM 468 / ACE-M), this protein is UPF0391 membrane protein Mbur_2216.